The chain runs to 490 residues: Bifunctional IPC transferase and DIPP synthase (490 aa).

Residues 72–290 form a mobA-like NTP transferase region; sequence LMKAVILAAG…RANRALVSAA (219 aa). Residues 78 to 80, Lys-91, Asp-144, and Glu-180 contribute to the CTP site; that span reads LAA. Glu-180 is a Mg(2+) binding site. The segment at 291–490 is CDP-alcohol phosphatidyltransferases; it reads VKGSGDGFIS…VTLLAVLVSK (200 aa). A run of 4 helical transmembrane segments spans residues 329-349, 389-409, 447-467, and 468-488; these read FLVGAFSALASFFSIPLAGLL, FLAIIALLYPKTATVAMFAIF, IFLIMIFCLLSAISLQWIFWM, and FLFVAAISLTRVVVTLLAVLV.

It in the N-terminal section; belongs to the MobA family. The protein in the C-terminal section; belongs to the CDP-alcohol phosphatidyltransferase class-I family. In terms of assembly, forms a mixture of monomers and dimers in solution, with prevalence of the monomeric form. Mg(2+) serves as cofactor.

The protein resides in the membrane. The enzyme catalyses 1D-myo-inositol 3-phosphate + CTP + H(+) = CDP-1L-myo-inositol + diphosphate. It catalyses the reaction CDP-1L-myo-inositol + 1D-myo-inositol 3-phosphate = bis(1L-myo-inositol) 3,1'-phosphate 1-phosphate + CMP + H(+). Functionally, involved in biosynthesis of di-myo-inositol phosphate (DIP), a widespread organic solute in microorganisms adapted to hot environments. Catalyzes the condensation of CTP and L-myo-inositol-1-phosphate into CDP-L-myo-inositol, as well as the biosynthesis of di-myo-inositol-1,3'-phosphate-1'-phosphate (DIPP) from CDP-L-myo-inositol and L-myo-inositol-1-phosphate. The cytidylyltransferase is absolutely specific for CTP and L-myo-inositol-1-P. The DIPP synthase uses only L-myoinositol-1-phosphate as an alcohol acceptor, but CDP-glycerol, as well as CDP-L-myo-inositol and CDP-D-myoinositol, are recognized as alcohol donors. This is Bifunctional IPC transferase and DIPP synthase from Archaeoglobus fulgidus (strain ATCC 49558 / DSM 4304 / JCM 9628 / NBRC 100126 / VC-16).